Reading from the N-terminus, the 528-residue chain is MALKWTTVLLIQLSFYFSSGSCGKVLVWAAEYSLWMNMKTILKELVQRGHEVTVLASSASILFDPNDSSTLKLEVYPTSLTKTEFENIIMQLVKRLSEIQKDTFWLPFSQEQEILWAINDIIRNFCKDVVSNKKLMKKLQESRFDIVFADAYLPCGELLAELFNIPFVYSHSFSPGYSFERHSGGFIFPPSYVPVVMSKLSDQMTFMERVKNMLYVLYFDFWFQIFNMKKWDQFYSEVLGRPTTLSETMRKADIWLMRNSWNFKFPHPFLPNVDFVGGLHCKPAKPLPKEMEEFVQSSGENGVVVFSLGSMVSNMTEERANVIATALAKIPQKVLWRFDGNKPDALGLNTRLYKWIPQNDLLGHPKTRAFITHGGANGIYEAIYHGIPMVGIPLFFDQPDNIAHMKAKGAAVRVDFNTMSSTDLLNALKTVINDPSYKENIMKLSRIQHDQPVKPLDRAVFWIEFVMRHKGAKHLRVAAHNLTWFQYHSLDVIGFLLACVATVLFIITKCCLFCFWKFARKGKKGKRD.

The first 23 residues, 1–23 (MALKWTTVLLIQLSFYFSSGSCG), serve as a signal peptide directing secretion. Asparagine 66 is a glycosylation site (N-linked (GlcNAc...) asparagine). Residue lysine 134 is modified to N6-succinyllysine. 2 N-linked (GlcNAc...) asparagine glycosylation sites follow: asparagine 314 and asparagine 481. The chain crosses the membrane as a helical span at residues 492–512 (VIGFLLACVATVLFIITKCCL).

Belongs to the UDP-glycosyltransferase family.

The protein localises to the microsome membrane. The protein resides in the endoplasmic reticulum membrane. The catalysed reaction is glucuronate acceptor + UDP-alpha-D-glucuronate = acceptor beta-D-glucuronoside + UDP + H(+). In terms of biological role, UDPGT is of major importance in the conjugation and subsequent elimination of potentially toxic xenobiotics and endogenous compounds. The chain is UDP-glucuronosyltransferase 2B10 (UGT2B10) from Homo sapiens (Human).